Here is a 388-residue protein sequence, read N- to C-terminus: Succinate--CoA ligase [ADP-forming] subunit beta (388 aa).

The ATP-grasp domain maps to 9 to 244 (KQLFKEYGLP…PSQEDAREAH (236 aa)). ATP contacts are provided by residues K46, 53-55 (GRG), E99, T102, and E107. Residues N199 and D213 each coordinate Mg(2+). Residues N264 and 321 to 323 (GIV) contribute to the substrate site.

It belongs to the succinate/malate CoA ligase beta subunit family. As to quaternary structure, heterotetramer of two alpha and two beta subunits. Mg(2+) is required as a cofactor.

It carries out the reaction succinate + ATP + CoA = succinyl-CoA + ADP + phosphate. It catalyses the reaction GTP + succinate + CoA = succinyl-CoA + GDP + phosphate. It participates in carbohydrate metabolism; tricarboxylic acid cycle; succinate from succinyl-CoA (ligase route): step 1/1. Functionally, succinyl-CoA synthetase functions in the citric acid cycle (TCA), coupling the hydrolysis of succinyl-CoA to the synthesis of either ATP or GTP and thus represents the only step of substrate-level phosphorylation in the TCA. The beta subunit provides nucleotide specificity of the enzyme and binds the substrate succinate, while the binding sites for coenzyme A and phosphate are found in the alpha subunit. In Alteromonas mediterranea (strain DSM 17117 / CIP 110805 / LMG 28347 / Deep ecotype), this protein is Succinate--CoA ligase [ADP-forming] subunit beta.